A 1105-amino-acid polypeptide reads, in one-letter code: KAT8 regulatory NSL complex subunit 1 (1105 aa).

Residue lysine 104 is modified to N6-acetyllysine. Disordered stretches follow at residues 145–211 and 225–263; these read GQTA…CTLP and NNST…GVKL. A compositionally biased stretch (polar residues) spans 225 to 258; that stretch reads NNSTANKSSVNSMEQPALQGSSRLSPGTDSSSNL. A Phosphoserine modification is found at serine 249. Lysine 262 is covalently cross-linked (Glycyl lysine isopeptide (Lys-Gly) (interchain with G-Cter in SUMO2)). Serine 268 is modified (phosphoserine). Residues 283–314 are a coiled coil; it reads RITALLRRQADIESRARRLQKRLQVVQAKQVE. Lysine 331 participates in a covalent cross-link: Glycyl lysine isopeptide (Lys-Gly) (interchain with G-Cter in SUMO2). Disordered regions lie at residues 399–426 and 733–857; these read DSDV…PEQR and TAKL…RRGE. 2 stretches are compositionally biased toward basic and acidic residues: residues 741–753 and 780–804; these read TRPD…HLDD and DPNH…HHTD. Low complexity predominate over residues 827–850; that stretch reads STSSDSPAPASSSSQVTASTSQQP. A required for activation of KAT8 histone acetyltransferase activity region spans residues 850 to 882; that stretch reads PVRRRRGESSFDINNIVIPMSVAATTRVEKLQY. Positions 884-1035 constitute a PEHE domain; that stretch reads EILTPSWREV…GLDEQSVQPW (152 aa). The interaction with KAT8 HAT domain stretch occupies residues 910-928; the sequence is EDLSDAAFAALHAKCEEME. The interval 938–1034 is disordered; that stretch reads VPPQRRGSRS…LGLDEQSVQP (97 aa). The span at 955–965 shows a compositional bias: polar residues; sequence TTPQLGSANPS. Low complexity predominate over residues 975–988; that stretch reads SSSHSLSEYSHGQS. Residues serine 991 and serine 994 each carry the phosphoserine modification. Threonine 1003 is subject to Phosphothreonine. Over residues 1008 to 1019 the composition is skewed to basic and acidic residues; it reads DTPRHLASEDTR. Position 1045 is a phosphoserine (serine 1045). The segment at 1058 to 1105 is disordered; the sequence is ERAARCTRRTSGSKTGRETEAAPTSPPIVPLKSRHLVAAATAQRPTHR.

As to quaternary structure, component of the NSL complex at least composed of MOF/KAT8, KANSL1, KANSL2, KANSL3, MCRS1, PHF20, OGT1/OGT, WDR5 and HCFC1. Interacts (via PEHE domain) with KAT8 (via HAT domain); the interaction is direct. Component of some MLL1/MLL complex, at least composed of the core components KMT2A/MLL1, ASH2L, HCFC1, WDR5 and RBBP5, as well as the facultative components BACC1, CHD8, E2F6, HSP70, INO80C, KANSL1, LAS1L, MAX, MCRS1, MGA, KAT8/MOF, PELP1, PHF20, PRP31, RING2, RUVB1/TIP49A, RUVB2/TIP49B, SENP3, TAF1, TAF4, TAF6, TAF7, TAF9 and TEX10. Expressed in the brain.

It is found in the nucleus. Its subcellular location is the chromosome. The protein localises to the centromere. The protein resides in the kinetochore. It localises to the mitochondrion. It is found in the cytoplasm. Its subcellular location is the cytoskeleton. The protein localises to the spindle pole. Non-catalytic component of the NSL histone acetyltransferase complex, a multiprotein complex that mediates histone H4 acetylation at 'Lys-5'- and 'Lys-8' (H4K5ac and H4K8ac) at transcription start sites and promotes transcription initiation. The NSL complex also acts as a regulator of gene expression in mitochondria. In addition to its role in transcription, KANSL1 also plays an essential role in spindle assembly during mitosis. Associates with microtubule ends and contributes to microtubule stability. This Homo sapiens (Human) protein is KAT8 regulatory NSL complex subunit 1 (KANSL1).